The chain runs to 397 residues: Cysteine desulfurase IscS (397 aa).

Pyridoxal 5'-phosphate-binding positions include 72 to 73, Asn152, Gln180, and 200 to 202; these read GS and SAH. The residue at position 203 (Lys203) is an N6-(pyridoxal phosphate)lysine. Residue Thr238 participates in pyridoxal 5'-phosphate binding. The active-site Cysteine persulfide intermediate is Cys328. A [2Fe-2S] cluster-binding site is contributed by Cys328.

The protein belongs to the class-V pyridoxal-phosphate-dependent aminotransferase family. NifS/IscS subfamily. Homodimer. Forms a heterotetramer with IscU, interacts with other sulfur acceptors. Requires pyridoxal 5'-phosphate as cofactor.

Its subcellular location is the cytoplasm. The enzyme catalyses (sulfur carrier)-H + L-cysteine = (sulfur carrier)-SH + L-alanine. It functions in the pathway cofactor biosynthesis; iron-sulfur cluster biosynthesis. In terms of biological role, master enzyme that delivers sulfur to a number of partners involved in Fe-S cluster assembly, tRNA modification or cofactor biosynthesis. Catalyzes the removal of elemental sulfur atoms from cysteine to produce alanine. Functions as a sulfur delivery protein for Fe-S cluster synthesis onto IscU, an Fe-S scaffold assembly protein, as well as other S acceptor proteins. This is Cysteine desulfurase IscS from Clostridium botulinum (strain Kyoto / Type A2).